The sequence spans 595 residues: Isoprene synthase, chloroplastic (595 aa).

The transit peptide at 1–37 directs the protein to the chloroplast; the sequence is MATELLCLHRPISLTHKLFRNPLPKVIQATPLTLKLR. A dimethylallyl diphosphate-binding site is contributed by Asp-345. Mg(2+)-binding residues include Asp-345 and Asp-349. The DDXXD motif motif lies at 345 to 349; sequence DDIYD. Glu-423, Arg-486, and Asn-489 together coordinate dimethylallyl diphosphate. Mg(2+) contacts are provided by Asn-489, Ser-493, and Glu-497.

This sequence belongs to the terpene synthase family. Tpsb subfamily. Mg(2+) serves as cofactor. In terms of tissue distribution, predominantly expressed in leaves.

The protein resides in the plastid. It is found in the chloroplast. The enzyme catalyses dimethylallyl diphosphate = isoprene + diphosphate. It participates in terpene metabolism. Functionally, lyase that catalyzes the formation of isoprene from dimethylallyl diphosphate, but not from isopentenyl diphosphate or geranyl diphosphate. The sequence is that of Isoprene synthase, chloroplastic from Populus alba (White poplar).